A 142-amino-acid polypeptide reads, in one-letter code: Transcriptional regulator MraZ (142 aa).

SpoVT-AbrB domains lie at 5–51 (ASAL…PRPE) and 77–120 (AADV…DAAT).

The protein belongs to the MraZ family. As to quaternary structure, forms oligomers.

The protein resides in the cytoplasm. It is found in the nucleoid. This chain is Transcriptional regulator MraZ, found in Ralstonia nicotianae (strain ATCC BAA-1114 / GMI1000) (Ralstonia solanacearum).